The primary structure comprises 71 residues: Translation initiation factor IF-1 (71 aa).

An S1-like domain is found at 1-71 (MSKDDLIQFT…LTKGRVIHRH (71 aa)).

It belongs to the IF-1 family. As to quaternary structure, component of the 30S ribosomal translation pre-initiation complex which assembles on the 30S ribosome in the order IF-2 and IF-3, IF-1 and N-formylmethionyl-tRNA(fMet); mRNA recruitment can occur at any time during PIC assembly.

It localises to the cytoplasm. One of the essential components for the initiation of protein synthesis. Stabilizes the binding of IF-2 and IF-3 on the 30S subunit to which N-formylmethionyl-tRNA(fMet) subsequently binds. Helps modulate mRNA selection, yielding the 30S pre-initiation complex (PIC). Upon addition of the 50S ribosomal subunit IF-1, IF-2 and IF-3 are released leaving the mature 70S translation initiation complex. In Rickettsia conorii (strain ATCC VR-613 / Malish 7), this protein is Translation initiation factor IF-1.